Here is a 293-residue protein sequence, read N- to C-terminus: uncharacterized protein (293 aa).

Residues 65-89 are a coiled coil; the sequence is LQKYLENIKNKKLNLNKQSNNQTNN. The tract at residues 81-112 is disordered; the sequence is KQSNNQTNNQTNNQTNNQTNNQTNNIRPQINN.

Its subcellular location is the virion. This is an uncharacterized protein from Acanthamoeba polyphaga mimivirus (APMV).